The sequence spans 130 residues: Cuticle protein 14 isoform a (130 aa).

One can recognise a Chitin-binding type R&amp;R domain in the interval 24-90 (IGNYNFGYNE…NVHTNEPGTD (67 aa)).

The sequence is that of Cuticle protein 14 isoform a from Limulus polyphemus (Atlantic horseshoe crab).